The following is a 102-amino-acid chain: Large ribosomal subunit protein bL21 (102 aa).

It belongs to the bacterial ribosomal protein bL21 family. In terms of assembly, part of the 50S ribosomal subunit. Contacts protein L20.

In terms of biological role, this protein binds to 23S rRNA in the presence of protein L20. This Bacillus licheniformis (strain ATCC 14580 / DSM 13 / JCM 2505 / CCUG 7422 / NBRC 12200 / NCIMB 9375 / NCTC 10341 / NRRL NRS-1264 / Gibson 46) protein is Large ribosomal subunit protein bL21.